A 586-amino-acid polypeptide reads, in one-letter code: Arginine--tRNA ligase (586 aa).

A 'HIGH' region motif is present at residues 128-138 (ANPTGPLHVGH).

The protein belongs to the class-I aminoacyl-tRNA synthetase family. In terms of assembly, monomer.

The protein resides in the cytoplasm. The enzyme catalyses tRNA(Arg) + L-arginine + ATP = L-arginyl-tRNA(Arg) + AMP + diphosphate. The polypeptide is Arginine--tRNA ligase (Coxiella burnetii (strain RSA 331 / Henzerling II)).